Consider the following 89-residue polypeptide: Small ribosomal subunit protein uS15 (89 aa).

This sequence belongs to the universal ribosomal protein uS15 family. Part of the 30S ribosomal subunit. Forms a bridge to the 50S subunit in the 70S ribosome, contacting the 23S rRNA.

Functionally, one of the primary rRNA binding proteins, it binds directly to 16S rRNA where it helps nucleate assembly of the platform of the 30S subunit by binding and bridging several RNA helices of the 16S rRNA. Its function is as follows. Forms an intersubunit bridge (bridge B4) with the 23S rRNA of the 50S subunit in the ribosome. This is Small ribosomal subunit protein uS15 from Rippkaea orientalis (strain PCC 8801 / RF-1) (Cyanothece sp. (strain PCC 8801)).